The following is a 70-amino-acid chain: Putative membrane protein insertion efficiency factor (70 aa).

This sequence belongs to the UPF0161 family.

The protein localises to the cell inner membrane. In terms of biological role, could be involved in insertion of integral membrane proteins into the membrane. The polypeptide is Putative membrane protein insertion efficiency factor (Methylobacillus flagellatus (strain ATCC 51484 / DSM 6875 / VKM B-1610 / KT)).